The sequence spans 124 residues: Large ribosomal subunit protein uL18 (124 aa).

This sequence belongs to the universal ribosomal protein uL18 family. As to quaternary structure, part of the 50S ribosomal subunit; part of the 5S rRNA/L5/L18/L25 subcomplex. Contacts the 5S and 23S rRNAs.

Its function is as follows. This is one of the proteins that bind and probably mediate the attachment of the 5S RNA into the large ribosomal subunit, where it forms part of the central protuberance. This chain is Large ribosomal subunit protein uL18, found in Parafrankia sp. (strain EAN1pec).